A 450-amino-acid polypeptide reads, in one-letter code: MLWKITDNVKYEEDCEDRHDGSSNGNPRVPHLSSAGQHLYSPAPPLSHTGVAEYQPPPYFPPPYQQLAYSQSADPYSHLGEAYAAAINPLHQPAPTGSQQQAWPGRQSQEGAGLPSHHGRPAGLLPHLSGLEAGAVSARRDAYRRSDLLLPHAHALDAAGLAENLGLHDMPHQMDEVQNVDDQHLLLHDQTVIRKGPISMTKNPLNLPCQKELVGAVMNPTEVFCSVPGRLSLLSSTSKYKVTVAEVQRRLSPPECLNASLLGGVLRRAKSKNGGRSLREKLDKIGLNLPAGRRKAAHVTLLTSLVEGEAVHLARDFAYVCEAEFPSKPVAEYLTRPHLGGRNEMAARKNMLLAAQQLCKEFTELLSQDRTPHGTSRLAPVLETNIQNCLSHFSLITHGFGSQAICAAVSALQNYIKEALIVIDKSYMNPGDQSPADSNKTLEKMEKHRK.

A Glycyl lysine isopeptide (Lys-Gly) (interchain with G-Cter in SUMO) cross-link involves residue Lys10. 2 disordered regions span residues 13 to 63 (EDCE…FPPP) and 90 to 126 (LHQPAPTGSQQQAWPGRQSQEGAGLPSHHGRPAGLLP). The PPxY motif motif lies at 59 to 64 (YFPPPY). Residues 95 to 110 (PTGSQQQAWPGRQSQE) show a composition bias toward polar residues. Position 252 is a phosphoserine; by PKA (Ser252). Residues 293-424 (RRKAAHVTLL…YIKEALIVID (132 aa)) form an H-S-H (helix-span-helix), dimerization region. Positions 431–450 (GDQSPADSNKTLEKMEKHRK) are disordered. The residue at position 434 (Ser434) is a Phosphoserine. Positions 440–450 (KTLEKMEKHRK) are enriched in basic and acidic residues.

This sequence belongs to the AP-2 family. In terms of assembly, binds DNA as a dimer. Can form homodimers or heterodimers with other AP-2 family members. Interacts with WWOX. Interacts with UBE2I. Interacts with KCTD1; this interaction represses transcription activation. Interacts with CITED2 (via C-terminus); the interaction stimulates TFAP2B-transcriptional activity. Interacts with CITED4. Interacts with MTA1. Sumoylated on Lys-10; which inhibits transcriptional activity.

It is found in the nucleus. Its function is as follows. Sequence-specific DNA-binding transcription factor that interacts with cellular enhancer elements to regulate transcription of selected genes, and which plays a key role in early embryonic development. AP-2 factors bind to the consensus sequence 5'-GCCNNNGGC-3' and activate genes involved in a large spectrum of important biological functions. TFAP2C plays a key role in early embryonic development by regulating both inner cell mass (ICM) and trophectoderm differentiation. At the 8-cell stage, during morula development, controls expression of cell-polarity genes. Upon trophoblast commitment, binds to late trophectoderm genes in blastocysts together with CDX2, and later to extra-embryonic ectoderm genes together with SOX2. Binds to both closed and open chromatin with other transcription factors. Involved in the MTA1-mediated epigenetic regulation of ESR1 expression in breast cancer. This chain is Transcription factor AP-2 gamma (TFAP2C), found in Homo sapiens (Human).